Reading from the N-terminus, the 31-residue chain is Cycloviolin-A (31 aa).

Residues 1–31 (GVIPCGESCVFIPCISAAIGCSCKNKVCYRN) constitute a cross-link (cyclopeptide (Gly-Asn)). Cystine bridges form between Cys-5–Cys-21, Cys-9–Cys-23, and Cys-14–Cys-28.

This is a cyclic peptide.

Its function is as follows. Probably participates in a plant defense mechanism. Has anti-HIV activity. The protein is Cycloviolin-A of Leonia cymosa (Sacha uba).